We begin with the raw amino-acid sequence, 65 residues long: Large ribosomal subunit protein uL29 (65 aa).

This sequence belongs to the universal ribosomal protein uL29 family.

The sequence is that of Large ribosomal subunit protein uL29 from Acidovorax ebreus (strain TPSY) (Diaphorobacter sp. (strain TPSY)).